A 536-amino-acid chain; its full sequence is Cytochrome P450 monooxygenase macC (536 aa).

A helical transmembrane segment spans residues Ala2–Phe22. Cys448 contributes to the heme binding site.

The protein belongs to the cytochrome P450 family. Heme serves as cofactor.

The protein resides in the membrane. It participates in secondary metabolite biosynthesis; terpenoid biosynthesis. Its function is as follows. Cytochrome P450 monooxygenase; part of the gene cluster that mediates the biosynthesis of macrophorins, isoprenoid epoxycyclohexenones containing cyclized drimane moieties. The first step of the pathway is the synthesis of 6-methylsalicylic acid (6-MSA) by the polyketide synthase macA. 6-MSA is then converted to m-cresol by the decarboxylase macB. The cytochrome P450 monooxygenase macC then catalyzes the oxidation of m-cresol to toluquinol. Epoxidation of toluquinol is then performed by the short chain dehydrogenase macD, with the help of macE, and a further prenylation by macG leads to 7-deacetoxyyanuthone A. The next step is the hydroxylation of C-22 of 7-deacetoxyyanuthone A by the cytochrome P450 monooxygenase macH to yield 22-deacetylyanuthone A. O-Mevalon transferase macI then attaches mevalon to the hydroxyl group of 22-deacetylyanuthone A to produce yanuthone E. The terpene cyclase macJ catalyzes the cyclization of 22-deacetylyanuthone A to macrophorin A. MacJ is also able to catalyze cyclization of yanuthone E and 7-deacetoxyyanuthone A to their corresponding macrophorins. The macJ products can be further modified by macH and macJ, as well as by the FAD-dependent monooxygenase macF, to produce additional macrophorins, including 4'-oxomacrophorin A, 4'-oxomacrophorin D and 4'-oxomacrophorin E. This chain is Cytochrome P450 monooxygenase macC, found in Penicillium terrestre.